The following is a 451-amino-acid chain: tRNA modification GTPase MnmE (451 aa).

Residues Arg-25, Glu-82, and Lys-121 each contribute to the (6S)-5-formyl-5,6,7,8-tetrahydrofolate site. One can recognise a TrmE-type G domain in the interval 217–374; the sequence is GMSVVILGRP…LKQHLKTEMG (158 aa). Asn-227 contributes to the K(+) binding site. Residues 227–232, 246–252, and 271–274 each bind GTP; these read NAGKSS, TDIAGTT, and DTAG. Ser-231 is a Mg(2+) binding site. Positions 246, 248, and 251 each coordinate K(+). Residue Thr-252 coordinates Mg(2+). Lys-451 lines the (6S)-5-formyl-5,6,7,8-tetrahydrofolate pocket.

The protein belongs to the TRAFAC class TrmE-Era-EngA-EngB-Septin-like GTPase superfamily. TrmE GTPase family. In terms of assembly, homodimer. Heterotetramer of two MnmE and two MnmG subunits. The cofactor is K(+).

The protein localises to the cytoplasm. In terms of biological role, exhibits a very high intrinsic GTPase hydrolysis rate. Involved in the addition of a carboxymethylaminomethyl (cmnm) group at the wobble position (U34) of certain tRNAs, forming tRNA-cmnm(5)s(2)U34. This is tRNA modification GTPase MnmE from Hydrogenovibrio crunogenus (strain DSM 25203 / XCL-2) (Thiomicrospira crunogena).